A 66-amino-acid polypeptide reads, in one-letter code: Nigrocin-2ISb (66 aa).

The first 22 residues, 1-22 (MFTLKKSMLLLFFLGTINLSLC), serve as a signal peptide directing secretion. The propeptide at 23–43 (QEERDAEEERRDEDNAKMEEI) is removed in mature form. Cys60 and Cys66 form a disulfide bridge.

As to expression, expressed by the skin glands.

It localises to the secreted. Its function is as follows. Has antimicrobial activity against Gram-negative bacterium E.coli ATCC 8739 (MIC=50 ug), against Gram positive bacteria S.aureus ATCC 6538 (MIC=3.1 ug), methicillin-resistant S.aureus ATCC 43300 (MIC=12.5 ug), B.subtilis ATCC 6633 (MIC=12.5 ug) and against fungus C.albicans ATCC 90028 (MIC=50 ug). This is Nigrocin-2ISb from Odorrana ishikawae (Ishikawa's frog).